Reading from the N-terminus, the 78-residue chain is Acyl carrier protein (78 aa).

One can recognise a Carrier domain in the interval 1-76; sequence MALFEDIQAV…DVVKYIEDNK (76 aa). Ser36 is modified (O-(pantetheine 4'-phosphoryl)serine).

It belongs to the acyl carrier protein (ACP) family. 4'-phosphopantetheine is transferred from CoA to a specific serine of apo-ACP by AcpS. This modification is essential for activity because fatty acids are bound in thioester linkage to the sulfhydryl of the prosthetic group.

It is found in the cytoplasm. Its pathway is lipid metabolism; fatty acid biosynthesis. Carrier of the growing fatty acid chain in fatty acid biosynthesis. The chain is Acyl carrier protein from Helicobacter pylori (strain Shi470).